The sequence spans 131 residues: Profilin (131 aa).

Cys-13 and Cys-115 form a disulfide bridge. The Involved in PIP2 interaction motif lies at Ala-81–Thr-97. Phosphothreonine is present on Thr-111.

Belongs to the profilin family. Occurs in many kinds of cells as a complex with monomeric actin in a 1:1 ratio.

The protein localises to the cytoplasm. It localises to the cytoskeleton. In terms of biological role, binds to actin and affects the structure of the cytoskeleton. At high concentrations, profilin prevents the polymerization of actin, whereas it enhances it at low concentrations. In Phoenix dactylifera (Date palm), this protein is Profilin.